The chain runs to 767 residues: MMKQCARRQMTEPVFRVAVLLALCSLSIGVDVHQAQKTPSISSAALQRHKRDWKWDKLYAYEETRPKNPPEKIGKLENTFFSSSTRYILKGDGAKDKFGVTDNGDIVVLAKLDRETQSVYNLSASLLNIHTGELVDKDESFVIVVLDINDNIPVFDSDQSGSISESSRAGTTIMKVKATDADDSSTENGRIDFKLLNGTDLFKIKPNGDLIALKSDLDREKQSQYLIAVQAKDMPEHLTGNSATTVVTINIKDINDNIATFKKERYQFTVKEDLKPGSEIGLLEVEDKDEIQNKDPTFALQSKFNDVFDIKRTKEKDGMLSLKVPLDYEKEKTHKFIVIVEEHTVSRTPDNKGLLKRTEVIIDVTDVDEPPIFNQTEYTFSVFEGPFKNPVIGAVSAKDPDSASYKIRYTIEDANCPVDVDPVNGYLSLKRTLDREQESLYTFQVTAHEDVLNGLKSSTMVSLKVLDINDNAPELTNGSYVYVCENDKPNTIIGTIGASDKDENSGRFRFTLARKSSNFSLYDNQDNTATIVLKQGGFSTENSEEYVLEIEIADGGTPEQKSVNLLQIKVCTCQSGRRVEYCMSYARTGMSVSALLAILLCIITILVIVILIVLRRRYQKEVLVTKASGEIHEQLVRYDEEGGGEMDTNGYDVSILSSACHDSSFRPSVGPALYAMVKKPPACKGDMAMMIEVKKDEADRDRDGIPYDTLHIYGYEGTESLAGSLSSLDSSSSGSNLDYDFIHEWGPRFRTLAQLYGVDGSDSDSSY.

An N-terminal signal peptide occupies residues M1–G29. A propeptide spanning residues V30 to R51 is cleaved from the precursor. Over V30–S593 the chain is Extracellular. 4 residues coordinate Ca(2+): E62, E63, D113, and E115. Cadherin domains follow at residues R86–F155, F155–F261, K262–F373, N374–L475, and L475–Y581. Residue N121 is glycosylated (N-linked (GlcNAc...) asparagine). Ca(2+) is bound by residues D147, I148, N149, D150, N151, D180, and D182. N197 carries an N-linked (GlcNAc...) asparagine glycan. D233 provides a ligand contact to Ca(2+). N-linked (GlcNAc...) asparagine glycosylation is found at N374, N477, and N518. A helical transmembrane segment spans residues A594–L614. Over R615–Y767 the chain is Cytoplasmic.

Its subcellular location is the cell membrane. It localises to the cell junction. The protein localises to the adherens junction. Cadherins are calcium-dependent cell adhesion proteins. They preferentially interact with themselves in a homophilic manner in connecting cells; cadherins may thus contribute to the sorting of heterogeneous cell types. Required for embryonic cardiac looping and heart chamber development, via promotion of cell-cell junction formation and subsequent attachment between the endothelial and myocardial layers of the heart. Required for the directional migration and delamination of endothelial cell monolayers, by which common cardinal veins form via the lumen ensheathment mechanism of vessel development as they migrate and connect with the heart inflow tract. Required for the formation of filopodia extensions (sprouts) at the initiation of intersegmental vessel development, by acting (via its C-terminus) to facilitate anchoring of the actin cytoskeleton to cell junctions in endothelial cells. Then positively regulates dorsal migration of stalk cells and sprout outgrowth towards the dorsal longitudinal anastomotic vessels (DLAV) via endothelial cell elongation. Following contact with the DLAV, required for intersegmental vessel lumen formation, potentially via facilitating the formation and/or extension of endothelial cell tight junctions that are required during tubulogenesis. The sequence is that of Cadherin-5 from Danio rerio (Zebrafish).